Consider the following 380-residue polypeptide: Cytochrome b (380 aa).

Transmembrane regions (helical) follow at residues 33 to 53, 77 to 98, 113 to 133, and 178 to 198; these read FGSLLGLCLIAQILTGLFLAM, WLIRNFHANGASFFFICLYLHV, WNIGVVLLLLVMMTAFVGYVL, and FFAFHFLFPFIIAAMVILHLL. Heme b-binding residues include H83 and H97. Positions 182 and 196 each coordinate heme b. H201 is an a ubiquinone binding site. Helical transmembrane passes span 226–246, 288–308, 320–340, and 347–367; these read YKDLFGFVILLLALSVLALFS, LGGVLALLASILILMVVPLLH, LTQILFWTLVADVAILTWIGG, and FITVGQVASVLYFALFLIFIP.

This sequence belongs to the cytochrome b family. The cytochrome bc1 complex contains 3 respiratory subunits (MT-CYB, CYC1 and UQCRFS1), 2 core proteins (UQCRC1 and UQCRC2) and probably 6 low-molecular weight proteins. Heme b serves as cofactor.

It localises to the mitochondrion inner membrane. Component of the ubiquinol-cytochrome c reductase complex (complex III or cytochrome b-c1 complex) that is part of the mitochondrial respiratory chain. The b-c1 complex mediates electron transfer from ubiquinol to cytochrome c. Contributes to the generation of a proton gradient across the mitochondrial membrane that is then used for ATP synthesis. The polypeptide is Cytochrome b (mt-cyb) (Neocyttus rhomboidalis (Spiky oreo dory)).